The primary structure comprises 365 residues: Chorismate synthase (365 aa).

Arg46 provides a ligand contact to NADP(+). FMN contacts are provided by residues Arg123 to Ser125, Asn241 to Gly242, Gly281, Lys296 to Ser300, and Arg322.

The protein belongs to the chorismate synthase family. As to quaternary structure, homotetramer. It depends on FMNH2 as a cofactor.

The enzyme catalyses 5-O-(1-carboxyvinyl)-3-phosphoshikimate = chorismate + phosphate. It participates in metabolic intermediate biosynthesis; chorismate biosynthesis; chorismate from D-erythrose 4-phosphate and phosphoenolpyruvate: step 7/7. Functionally, catalyzes the anti-1,4-elimination of the C-3 phosphate and the C-6 proR hydrogen from 5-enolpyruvylshikimate-3-phosphate (EPSP) to yield chorismate, which is the branch point compound that serves as the starting substrate for the three terminal pathways of aromatic amino acid biosynthesis. This reaction introduces a second double bond into the aromatic ring system. This Helicobacter pylori (strain HPAG1) protein is Chorismate synthase.